The chain runs to 109 residues: Class I hydrophobin 7 (109 aa).

An N-terminal signal peptide occupies residues 1–17; it reads MFAQSFIITALAALAVA. Cystine bridges form between Cys28-Cys88, Cys35-Cys82, Cys36-Cys69, and Cys89-Cys102.

Belongs to the fungal hydrophobin family. In terms of assembly, self-assembles to form functional amyloid fibrils called rodlets. Self-assembly into fibrillar rodlets occurs spontaneously at hydrophobic:hydrophilic interfaces and the rodlets further associate laterally to form amphipathic monolayers.

The protein resides in the secreted. The protein localises to the cell wall. Aerial growth, conidiation, and dispersal of filamentous fungi in the environment rely upon a capability of their secreting small amphipathic proteins called hydrophobins (HPBs) with low sequence identity. Class I can self-assemble into an outermost layer of rodlet bundles on aerial cell surfaces, conferring cellular hydrophobicity that supports fungal growth, development and dispersal; whereas Class II form highly ordered films at water-air interfaces through intermolecular interactions but contribute nothing to the rodlet structure. Hydph7 is a class I hydrophobin involved in fruiting body development. This Pleurotus ostreatus (strain PC15) (Oyster mushroom) protein is Class I hydrophobin 7.